Reading from the N-terminus, the 448-residue chain is UDP-N-acetylmuramoylalanine--D-glutamate ligase (448 aa).

116–122 is a binding site for ATP; that stretch reads GSNAKST.

The protein belongs to the MurCDEF family.

It localises to the cytoplasm. It catalyses the reaction UDP-N-acetyl-alpha-D-muramoyl-L-alanine + D-glutamate + ATP = UDP-N-acetyl-alpha-D-muramoyl-L-alanyl-D-glutamate + ADP + phosphate + H(+). Its pathway is cell wall biogenesis; peptidoglycan biosynthesis. Cell wall formation. Catalyzes the addition of glutamate to the nucleotide precursor UDP-N-acetylmuramoyl-L-alanine (UMA). In Pseudomonas savastanoi pv. phaseolicola (strain 1448A / Race 6) (Pseudomonas syringae pv. phaseolicola (strain 1448A / Race 6)), this protein is UDP-N-acetylmuramoylalanine--D-glutamate ligase.